Consider the following 2393-residue polypeptide: Leucine-rich repeat serine/threonine-protein kinase 1 (2393 aa).

10 ANK repeats span residues 56 to 86, 90 to 120, 123 to 152, 197 to 226, 230 to 259, 264 to 293, 317 to 347, 361 to 390, 407 to 437, and 439 to 464; these read HGRTPLMLAAHNGKLDSLRTILMLSPNSLNL, RGKTALHMAAESGETSIVLELVELGSDPMKS, EGHCALELAQMAGHNEVAAKLIDAIQKESE, EDETALLIACTNGHIEIVRHLLQFEEHLLQ, SKDTVIHAAVSSQNVEVLQLCLEKFPQLVK, EGSTCLHWAARCGSSECVSTILNFPFPSEF, ECRTAMYLAVAEGHLEVVKAMTDFKCTSIDG, RGRTPFMLAAFNQNLPLMTLLLDAGADVNL, IGSGALVEAVRSDGLHIVHFLLDRGALDTDN, and ALRLAAQGKNEKLIRVFLVRLVFADP. LRR repeat units lie at residues 532 to 553, 555 to 576, 580 to 600, 604 to 625, and 627 to 648; these read AITRVDLSDNRLNTFPSILFQM, SLRSLNLADNSIRKIEIPTYYI, SLEILNLRNNQLECIAIQFLS, QLQQLDVSKNELSQLPEYIWLC, and ALKELNASYNRLSTLPMVARAS. A disordered region spans residues 649–675; sequence RGERPRLNNSNNNFNTQSPTQESNPIV. LRR repeat units follow at residues 718-739, 742-763, and 765-787; these read TLTTINLSFNKFHTFPFCLACT, RLLILNMSNNSMTSLPPMACVP, and HLRTLDLSYNKIQESFIEASPLH. Residues 797–844 form a disordered region; sequence TSNGSMLPKRRNSPARQHRSRSKSAVRSQRSLSVSRHHALIDPQKEEE. Basic residues predominate over residues 804–820; sequence PKRRNSPARQHRSRSKS. Positions 821–830 are enriched in polar residues; it reads AVRSQRSLSV. Basic and acidic residues predominate over residues 835–844; it reads ALIDPQKEEE. LRR repeat units lie at residues 856–877, 883–905, 906–928, and 930–952; these read WLKTLQLAGNRLRSISVTNAAS, ALNVMDISDNKLLQAPPDVARLT, LLSMLNLSGNTAIKELPPDYGML, and RLWSLSLKGCSLKEPLESMVNVE. One can recognise a Roc domain in the interval 969 to 1167; that stretch reads ESKTYHHLRL…NTIYRTAWEV (199 aa). GTP-binding positions include 982–989, 1040–1044, and 1098–1101; these read GSDGVGKS, DFGGQ, and TNLD. The 190-residue stretch at 1233-1422 folds into the COR domain; the sequence is FYAACTFLHD…GFWSRLVTRI (190 aa). 2 disordered regions span residues 1361–1382 and 1596–1633; these read CPSPAGSPTKSPLRRTSPTDQN and RNGSRSRTSSSASHRRSQDDGELPITSSSHMKGSRTTG. Composition is skewed to polar residues over residues 1366–1382 and 1620–1633; these read GSPTKSPLRRTSPTDQN and ITSSSHMKGSRTTG. The Protein kinase domain occupies 1694–1992; sequence LKRSRMLGRG…LVGFCAAPEF (299 aa). ATP-binding positions include 1700-1708 and K1726; that span reads LGRGAFGFV. Residue D1847 is the Proton acceptor of the active site.

This sequence belongs to the protein kinase superfamily. TKL Ser/Thr protein kinase family. ROCO subfamily. Requires Mg(2+) as cofactor. Mn(2+) serves as cofactor. In terms of tissue distribution, expressed in cell bodies, but not in dendritic or axonal processes, of adult head neurons. Also present in non-neuronal tissues, such as the body wall musculature and the epithelial cells of the nematode vulva.

It is found in the golgi apparatus. The catalysed reaction is L-seryl-[protein] + ATP = O-phospho-L-seryl-[protein] + ADP + H(+). It catalyses the reaction L-threonyl-[protein] + ATP = O-phospho-L-threonyl-[protein] + ADP + H(+). Its function is as follows. Determines polarized sorting of synaptic vesicle (SV) proteins to the axons by excluding SV proteins from the dendrite-specific transport machinery in the Golgi. Role in stress response. Appears to antagonize the effects of pink-1 both in the regulation of axon guidance and stress response. The sequence is that of Leucine-rich repeat serine/threonine-protein kinase 1 (lrk-1) from Caenorhabditis elegans.